A 185-amino-acid polypeptide reads, in one-letter code: Casparian strip membrane protein 2 (185 aa).

Topologically, residues 1–25 (MKAVSIEAGEGSKAKRVHGVNRGIS) are cytoplasmic. Residues 26–46 (VFDLVLRIVALVGTLASAVAM) form a helical membrane-spanning segment. Topologically, residues 47–73 (GTADQALSFSTQIVNFEAQYDDIDAFK) are extracellular. A helical transmembrane segment spans residues 74–94 (FFVVSNSITCVYLALSIPISI). Over 95-106 (FHIIRSRAGKSR) the chain is Cytoplasmic. The helical transmembrane segment at 107 to 127 (VLLIVLDAIMLVFLTSGASAA) threads the bilayer. Residues 128 to 160 (AAIVYLAHNGNTSTNWFSICQQYTDFCQRSAGS) are Extracellular-facing. The N-linked (GlcNAc...) asparagine glycan is linked to asparagine 138. Residues 161–181 (LIGSFGAMALMVLLIILSSIA) form a helical membrane-spanning segment. At 182–185 (LSRR) the chain is on the cytoplasmic side.

The protein belongs to the Casparian strip membrane proteins (CASP) family. Homodimer and heterodimers.

The protein resides in the cell membrane. Its function is as follows. Regulates membrane-cell wall junctions and localized cell wall deposition. Required for establishment of the Casparian strip membrane domain (CSD) and the subsequent formation of Casparian strips, a cell wall modification of the root endodermis that determines an apoplastic barrier between the intraorganismal apoplasm and the extraorganismal apoplasm and prevents lateral diffusion. In Solanum demissum (Wild potato), this protein is Casparian strip membrane protein 2.